The following is a 77-amino-acid chain: Acyl carrier protein homolog (77 aa).

Residues 1-76 (MSINIKDLIM…DLINAFEDVL (76 aa)) enclose the Carrier domain. Ser36 carries the post-translational modification O-(pantetheine 4'-phosphoryl)serine.

In terms of processing, 4'-phosphopantetheine is transferred from CoA to a specific serine of the apo-ACP-like protein.

Its pathway is lipid metabolism; fatty acid biosynthesis. Carrier of the growing fatty acid chain in fatty acid biosynthesis. The polypeptide is Acyl carrier protein homolog (Ureaplasma parvum serovar 3 (strain ATCC 700970)).